A 492-amino-acid chain; its full sequence is Glycosyltransferase alg8 (492 aa).

A run of 4 helical transmembrane segments spans residues 13–32 (GWLL…PPQV), 47–69 (IGVW…LYVV), 379–401 (LTVA…LLWV), and 421–443 (PAYP…HVFF).

The protein belongs to the glycosyltransferase 2 family.

The protein localises to the cell membrane. The protein operates within glycan biosynthesis; alginate biosynthesis. In terms of biological role, possibly a processive enzyme that polymerizes GDP-mannuronic acid. This chain is Glycosyltransferase alg8 (alg8), found in Azotobacter vinelandii.